We begin with the raw amino-acid sequence, 116 residues long: RNA guanine-N7 methyltransferase activating subunit (116 aa).

The tract at residues 1 to 55 (MAEALGAQELYEKMFEQRFTANDKEYQEYLKREQDQPPIVEDWKMGNQRNTDRYR) is interaction with RNMT. A disordered region spans residues 31–116 (KREQDQPPIV…SNQRFHSDRY (86 aa)). Positions 36 to 42 (QPPIVED) match the RNMT-activating domain motif. An RNA-binding region spans residues 56–116 (DNRHHRGWDG…SNQRFHSDRY (61 aa)). Residues 67–78 (QNWSSNSYNQSY) show a composition bias toward low complexity. Residues 97-110 (YQQGHYTHNPSNQR) show a composition bias toward polar residues.

It belongs to the RAM family.

The protein resides in the nucleus. In terms of biological role, regulatory subunit of the mRNA-capping methyltransferase RNMT:RAMAC complex that methylates the N7 position of the added guanosine to the 5'-cap structure of mRNAs. Promotes the recruitment of the methyl donor, S-adenosyl-L-methionine, to RNMT. Regulates RNMT expression by a post-transcriptional stabilizing mechanism. Binds RNA. This is RNA guanine-N7 methyltransferase activating subunit (ramac) from Xenopus tropicalis (Western clawed frog).